A 261-amino-acid polypeptide reads, in one-letter code: Carbonic anhydrase 1 (261 aa).

The interval 1–31 (MASPDWGYDDKNGPEQWSKLYPIANGNNQSP) is disordered. Ala2 carries the N-acetylalanine modification. Positions 4–261 (PDWGYDDKNG…LKGRTVRASF (258 aa)) constitute an Alpha-carbonic anhydrase domain. His65 functions as the Proton donor/acceptor in the catalytic mechanism. Zn(2+) contacts are provided by His65, His68, His95, His97, and His120. Substrate-binding positions include Thr200 and 200-201 (TH). His201 lines the Zn(2+) pocket. Residues 241 to 261 (PMQHNNRPTQPLKGRTVRASF) form a disordered region.

Belongs to the alpha-carbonic anhydrase family. The cofactor is Zn(2+).

The protein resides in the cytoplasm. It catalyses the reaction hydrogencarbonate + H(+) = CO2 + H2O. It carries out the reaction urea = cyanamide + H2O. With respect to regulation, activated by histamine, imidazole, L-adrenaline, L- and D-histidine, and L- and D-phenylalanine. Inhibited by coumarins, sulfonamide derivatives such as acetazolamide, benzenesulfonamide and derivatives (4-carboxyethylbenzene-sulfonamide, 4-carboxyethylbenzene-sulfonamide ethyl ester, 4-(acetyl-2-aminoethyl)benzene-sulfonamide, 4-aminoethylbenzene-sulfonamide), and 'prong inhibitors' BR15, BR17, BR22 and BR30. Activated by a short exposition to Foscarnet (phosphonoformate trisodium salt), but inhibited by a long one. Esterase activity weakly reduced by cyanamide. Catalyzes the reversible hydration of carbon dioxide. Can hydrate cyanamide to urea. This is Carbonic anhydrase 1 (CA1) from Homo sapiens (Human).